The following is a 169-amino-acid chain: Lipoprotein signal peptidase (169 aa).

2 consecutive transmembrane segments (helical) span residues 56-76 (FLPP…VIIY) and 84-104 (QPLF…NLID). Active-site residues include D113 and D139. Residues 132-152 (WPIFNIADSAITIGACMLIIF) traverse the membrane as a helical segment.

Belongs to the peptidase A8 family.

The protein localises to the cell inner membrane. It catalyses the reaction Release of signal peptides from bacterial membrane prolipoproteins. Hydrolyzes -Xaa-Yaa-Zaa-|-(S,diacylglyceryl)Cys-, in which Xaa is hydrophobic (preferably Leu), and Yaa (Ala or Ser) and Zaa (Gly or Ala) have small, neutral side chains.. It participates in protein modification; lipoprotein biosynthesis (signal peptide cleavage). Its function is as follows. This protein specifically catalyzes the removal of signal peptides from prolipoproteins. The polypeptide is Lipoprotein signal peptidase (Chlorobium phaeovibrioides (strain DSM 265 / 1930) (Prosthecochloris vibrioformis (strain DSM 265))).